The primary structure comprises 1026 residues: Multidrug resistance protein MdtC (1026 aa).

The next 11 helical transmembrane spans lie at 15 to 35 (ILIA…LPVA), 333 to 353 (EVEE…FLFL), 360 to 380 (LIPA…MYLC), 387 to 407 (LSLM…IVVL), 431 to 451 (VGFT…PLLL), 463 to 483 (FAVT…TLTP), 528 to 548 (LVGV…IAIP), 853 to 873 (LILI…LYES), 897 to 917 (LFNA…IGIV), 953 to 973 (PIMM…LSGG), and 984 to 1004 (ITIV…TPVV).

This sequence belongs to the resistance-nodulation-cell division (RND) (TC 2.A.6) family. MdtC subfamily. As to quaternary structure, part of a tripartite efflux system composed of MdtA, MdtB and MdtC. MdtC forms a heteromultimer with MdtB.

It is found in the cell inner membrane. The chain is Multidrug resistance protein MdtC from Salmonella enteritidis PT4 (strain P125109).